Here is a 299-residue protein sequence, read N- to C-terminus: Pyridoxal 5'-phosphate synthase subunit PdxS (299 aa).

Aspartate 24 is a binding site for D-ribose 5-phosphate. The Schiff-base intermediate with D-ribose 5-phosphate role is filled by lysine 81. Glycine 153 contacts D-ribose 5-phosphate. Arginine 165 contacts D-glyceraldehyde 3-phosphate. D-ribose 5-phosphate contacts are provided by residues glycine 219 and 240–241 (GS).

Belongs to the PdxS/SNZ family. In the presence of PdxT, forms a dodecamer of heterodimers.

The catalysed reaction is aldehydo-D-ribose 5-phosphate + D-glyceraldehyde 3-phosphate + L-glutamine = pyridoxal 5'-phosphate + L-glutamate + phosphate + 3 H2O + H(+). Its pathway is cofactor biosynthesis; pyridoxal 5'-phosphate biosynthesis. Its function is as follows. Catalyzes the formation of pyridoxal 5'-phosphate from ribose 5-phosphate (RBP), glyceraldehyde 3-phosphate (G3P) and ammonia. The ammonia is provided by the PdxT subunit. Can also use ribulose 5-phosphate and dihydroxyacetone phosphate as substrates, resulting from enzyme-catalyzed isomerization of RBP and G3P, respectively. This is Pyridoxal 5'-phosphate synthase subunit PdxS from Methanococcus maripaludis (strain C6 / ATCC BAA-1332).